Reading from the N-terminus, the 406-residue chain is Elongation factor Tu, chloroplastic (406 aa).

The region spanning 8–210 (KTHINIATIG…LLDSYIPKPK (203 aa)) is the tr-type G domain. Residues 17-24 (GHFNHGKT), 77-81 (DCPGH), and 132-135 (NKED) each bind GTP. Mg(2+) is bound at residue T24.

This sequence belongs to the TRAFAC class translation factor GTPase superfamily. Classic translation factor GTPase family. EF-Tu/EF-1A subfamily. As to quaternary structure, monomer.

It is found in the plastid. The protein resides in the chloroplast. The catalysed reaction is GTP + H2O = GDP + phosphate + H(+). In terms of biological role, GTP hydrolase that promotes the GTP-dependent binding of aminoacyl-tRNA to the A-site of ribosomes during protein biosynthesis. In Chaetosphaeridium globosum (Charophycean green alga), this protein is Elongation factor Tu, chloroplastic (tufA).